The chain runs to 423 residues: Maintenance of mitochondrial morphology protein 1 (423 aa).

Topologically, residues 1–15 (MWLDDVASELSFTQG) are lumenal. Residues 16 to 36 (LLLGQLSIVILIGAFIKFFIF) traverse the membrane as a helical segment. Topologically, residues 37-423 (GDPPSPDVSA…PGSMPGLSMA (387 aa)) are cytoplasmic. Positions 110-322 (QPESLDWFNV…EPRFQQIELP (213 aa)) constitute an SMP-LTD domain. Disordered stretches follow at residues 327-370 (RKKN…EAET) and 394-423 (SEEGLRFRRRSRGRGDEYAMPGSMPGLSMA). Basic and acidic residues predominate over residues 350-367 (RSRDVERDLREEARKEVE).

The protein belongs to the MMM1 family. In terms of assembly, homodimer. Component of the ER-mitochondria encounter structure (ERMES) or MDM complex, composed of mmm1, mdm10, mdm12 and mdm34. A mmm1 homodimer associates with one molecule of mdm12 on each side in a pairwise head-to-tail manner, and the SMP-LTD domains of mmm1 and mdm12 generate a continuous hydrophobic tunnel for phospholipid trafficking.

The protein localises to the endoplasmic reticulum membrane. Component of the ERMES/MDM complex, which serves as a molecular tether to connect the endoplasmic reticulum (ER) and mitochondria. Components of this complex are involved in the control of mitochondrial shape and protein biogenesis, and function in nonvesicular lipid trafficking between the ER and mitochondria. The mdm12-mmm1 subcomplex functions in the major beta-barrel assembly pathway that is responsible for biogenesis of all outer membrane beta-barrel proteins, and acts in a late step after the SAM complex. The mdm10-mdm12-mmm1 subcomplex further acts in the TOM40-specific pathway after the action of the mdm12-mmm1 complex. Essential for establishing and maintaining the structure of mitochondria and maintenance of mtDNA nucleoids. The polypeptide is Maintenance of mitochondrial morphology protein 1 (Sclerotinia sclerotiorum (strain ATCC 18683 / 1980 / Ss-1) (White mold)).